Consider the following 309-residue polypeptide: Olfactory receptor 5B2 (309 aa).

Residues 1–23 (MENCTEVTKFILLGLTSVPELQI) are Extracellular-facing. N-linked (GlcNAc...) asparagine glycosylation occurs at N3. The helical transmembrane segment at 24-47 (PLFILFTFIYLLTLCGNLGMMLLI) threads the bilayer. Residues 48–55 (LMDSCLHT) are Cytoplasmic-facing. A helical membrane pass occupies residues 56-77 (PMYFFLSNLSLVDFGYSSAVTP). Over 78–98 (KVMAGFLRGDKVISYNACAVQ) the chain is Extracellular. C95 and C187 are joined by a disulfide. A helical transmembrane segment spans residues 99–118 (MFFFVALATVENYLLASMAY). Topologically, residues 119–137 (DRYAAVCKPLHYTTTMTAS) are cytoplasmic. The helical transmembrane segment at 138-156 (VGACLALGSYVCGFLNASF) threads the bilayer. The Extracellular segment spans residues 157–193 (HIGGIFSLSFCKSNLVHHFFCDVPAVMALSCSDKHTS). Residues 194–217 (EVILVFMSSFNIFFVLLVIFISYL) traverse the membrane as a helical segment. The Cytoplasmic segment spans residues 218–234 (FIFITILKMHSAKGHQK). The chain crosses the membrane as a helical span at residues 235–257 (ALSTCASHFTAVSVFYGTVIFIY). Over 258-270 (LQPSSSHSMDTDK) the chain is Extracellular. A helical membrane pass occupies residues 271 to 290 (MASVFYAMIIPMLNPVVYSL). Over 291–309 (RNREVQNAFKKVLRRQKFL) the chain is Cytoplasmic.

This sequence belongs to the G-protein coupled receptor 1 family.

The protein resides in the cell membrane. In terms of biological role, odorant receptor. The polypeptide is Olfactory receptor 5B2 (OR5B2) (Homo sapiens (Human)).